The primary structure comprises 506 residues: Maturase K (506 aa).

It belongs to the intron maturase 2 family. MatK subfamily.

Its subcellular location is the plastid. It is found in the chloroplast. In terms of biological role, usually encoded in the trnK tRNA gene intron. Probably assists in splicing its own and other chloroplast group II introns. The polypeptide is Maturase K (Arctostaphylos uva-ursi (Bearberry)).